The sequence spans 105 residues: ATP synthase subunit c (105 aa).

Transmembrane regions (helical) follow at residues 3 to 23 (FLALFFLALAGVAFAHDGGMG), 32 to 52 (SILGAMIGLGIAAFGGAIGMG), and 78 to 98 (VAMAMIEAQVIYTLVFAIIAI).

The protein belongs to the ATPase C chain family. In terms of assembly, F-type ATPases have 2 components, F(1) - the catalytic core - and F(0) - the membrane proton channel. F(1) has five subunits: alpha(3), beta(3), gamma(1), delta(1), epsilon(1). F(0) has three main subunits: a(1), b(2) and c(10-14). The alpha and beta chains form an alternating ring which encloses part of the gamma chain. F(1) is attached to F(0) by a central stalk formed by the gamma and epsilon chains, while a peripheral stalk is formed by the delta and b chains.

Its subcellular location is the cell inner membrane. In terms of biological role, f(1)F(0) ATP synthase produces ATP from ADP in the presence of a proton or sodium gradient. F-type ATPases consist of two structural domains, F(1) containing the extramembraneous catalytic core and F(0) containing the membrane proton channel, linked together by a central stalk and a peripheral stalk. During catalysis, ATP synthesis in the catalytic domain of F(1) is coupled via a rotary mechanism of the central stalk subunits to proton translocation. Key component of the F(0) channel; it plays a direct role in translocation across the membrane. A homomeric c-ring of between 10-14 subunits forms the central stalk rotor element with the F(1) delta and epsilon subunits. This chain is ATP synthase subunit c, found in Helicobacter pylori (strain P12).